Reading from the N-terminus, the 141-residue chain is Large ribosomal subunit protein uL14 (141 aa).

The protein belongs to the universal ribosomal protein uL14 family.

The sequence is that of Large ribosomal subunit protein uL14 (RPL23) from Tetrahymena thermophila (strain SB210).